The following is a 168-amino-acid chain: G/U mismatch-specific DNA glycosylase (168 aa).

Belongs to the uracil-DNA glycosylase (UDG) superfamily. TDG/mug family. As to quaternary structure, binds DNA as a monomer.

The protein localises to the cytoplasm. The catalysed reaction is Specifically hydrolyzes mismatched double-stranded DNA and polynucleotides, releasing free uracil.. Functionally, excises ethenocytosine and uracil, which can arise by alkylation or deamination of cytosine, respectively, from the corresponding mispairs with guanine in ds-DNA. It is capable of hydrolyzing the carbon-nitrogen bond between the sugar-phosphate backbone of the DNA and the mispaired base. The complementary strand guanine functions in substrate recognition. Required for DNA damage lesion repair in stationary-phase cells. The sequence is that of G/U mismatch-specific DNA glycosylase from Escherichia coli (strain UTI89 / UPEC).